A 444-amino-acid chain; its full sequence is 3-phosphoshikimate 1-carboxyvinyltransferase (444 aa).

Residues Lys32, Ser33, and Arg37 each contribute to the 3-phosphoshikimate site. Lys32 contributes to the phosphoenolpyruvate binding site. Phosphoenolpyruvate contacts are provided by Gly105 and Arg133. Residues Ser178, Gln180, Asp326, and Lys353 each contribute to the 3-phosphoshikimate site. Gln180 contacts phosphoenolpyruvate. Asp326 acts as the Proton acceptor in catalysis. Positions 357 and 398 each coordinate phosphoenolpyruvate.

It belongs to the EPSP synthase family. Monomer.

The protein resides in the cytoplasm. It carries out the reaction 3-phosphoshikimate + phosphoenolpyruvate = 5-O-(1-carboxyvinyl)-3-phosphoshikimate + phosphate. The protein operates within metabolic intermediate biosynthesis; chorismate biosynthesis; chorismate from D-erythrose 4-phosphate and phosphoenolpyruvate: step 6/7. Its function is as follows. Catalyzes the transfer of the enolpyruvyl moiety of phosphoenolpyruvate (PEP) to the 5-hydroxyl of shikimate-3-phosphate (S3P) to produce enolpyruvyl shikimate-3-phosphate and inorganic phosphate. This is 3-phosphoshikimate 1-carboxyvinyltransferase from Nitrosococcus oceani (strain ATCC 19707 / BCRC 17464 / JCM 30415 / NCIMB 11848 / C-107).